The primary structure comprises 253 residues: Ribosomal RNA small subunit methyltransferase J (253 aa).

Residues 101-102, 117-118, and Asp169 each bind S-adenosyl-L-methionine; these read RD and ER.

This sequence belongs to the methyltransferase superfamily. RsmJ family.

Its subcellular location is the cytoplasm. The enzyme catalyses guanosine(1516) in 16S rRNA + S-adenosyl-L-methionine = N(2)-methylguanosine(1516) in 16S rRNA + S-adenosyl-L-homocysteine + H(+). Specifically methylates the guanosine in position 1516 of 16S rRNA. The protein is Ribosomal RNA small subunit methyltransferase J of Psychromonas ingrahamii (strain DSM 17664 / CCUG 51855 / 37).